Reading from the N-terminus, the 337-residue chain is tRNA N(3)-cytidine methyltransferase METTL2 (337 aa).

Trp-66, Tyr-70, Gly-140, Asp-165, Asp-191, and Ile-212 together coordinate S-adenosyl-L-methionine.

The protein belongs to the methyltransferase superfamily. METL family. Monomer.

It is found in the cytoplasm. The enzyme catalyses cytidine(32) in tRNA(Thr) + S-adenosyl-L-methionine = N(3)-methylcytidine(32) in tRNA(Thr) + S-adenosyl-L-homocysteine + H(+). It catalyses the reaction cytidine(32) in tRNA(Arg)(CCU) + S-adenosyl-L-methionine = N(3)-methylcytidine(32) in tRNA(Arg)(CCU) + S-adenosyl-L-homocysteine + H(+). In terms of biological role, S-adenosyl-L-methionine-dependent methyltransferase that mediates N(3)-methylcytidine modification of residue 32 of the tRNA anticodon loop of tRNA(Thr)(UGU) and tRNA(Arg)(CCU). N(3)-methylcytidine methylation by mettl2 requires the N6-threonylcarbamoylation of tRNA (t6A37) by the EKC/KEOPS complex as prerequisite. The sequence is that of tRNA N(3)-cytidine methyltransferase METTL2 (mettl2) from Xenopus tropicalis (Western clawed frog).